A 508-amino-acid polypeptide reads, in one-letter code: UTP--glucose-1-phosphate uridylyltransferase (508 aa).

Residue S13 is modified to Phosphoserine. Residues 113–116 (LNGG), K127, Q190, and G222 each bind UTP. A substrate-binding site is contributed by 115 to 116 (GG). Mg(2+) is bound at residue K127. Residues H223 and 251–253 (NID) each bind substrate. Residues D253 and K396 each contribute to the UTP site. Position 253 (D253) interacts with Mg(2+). K396 is an active-site residue. T426 is modified (phosphothreonine). The residue at position 434 (S434) is a Phosphoserine. At K438 the chain carries N6-acetyllysine. Phosphoserine occurs at positions 448 and 461. The tract at residues 457-508 (HLTVSGDVTFGKNVSLKGTVIIIANHGDRIDIPPGAVLENKIVSGNLRILDH) is oligomerization. The interval 502-503 (NL) is critical for end-to-end subunit interaction.

This sequence belongs to the UDPGP type 1 family. As to quaternary structure, homooctamer.

The protein localises to the cytoplasm. The enzyme catalyses alpha-D-glucose 1-phosphate + UTP + H(+) = UDP-alpha-D-glucose + diphosphate. Its pathway is glycan biosynthesis; glycogen biosynthesis. Functionally, UTP--glucose-1-phosphate uridylyltransferase catalyzing the conversion of glucose-1-phosphate into UDP-glucose, a crucial precursor for the production of glycogen. The sequence is that of UTP--glucose-1-phosphate uridylyltransferase (UGP2) from Cricetulus griseus (Chinese hamster).